We begin with the raw amino-acid sequence, 238 residues long: MAVEGGMKCVKFLLYVLLLAFCACAVGLIAIGVAVQVVLKQAITHETTAGSLLPVVIIAVGAFLFLVAFVGCCGACKENYCLMITFAIFLSLIMLVEVAVAIAGYVFRDQVKSEFSKSFQKQMQNYLTDNKTATILDKLQKENKCCGASNYTDWERIPGMAKDRVPDSCCINITVGCGNDFKESTIHTQGCVETIAAWLRKNVLLVAGAALGIAFVEVLGIIFSCCLVKSIRSGYEVM.

Residues 2-11 are Cytoplasmic-facing; sequence AVEGGMKCVK. Residues 12-32 traverse the membrane as a helical segment; that stretch reads FLLYVLLLAFCACAVGLIAIG. The Extracellular portion of the chain corresponds to 33–51; that stretch reads VAVQVVLKQAITHETTAGS. Residues 52-72 form a helical membrane-spanning segment; that stretch reads LLPVVIIAVGAFLFLVAFVGC. The Cytoplasmic portion of the chain corresponds to 73 to 81; sequence CGACKENYC. Residues 82–102 traverse the membrane as a helical segment; the sequence is LMITFAIFLSLIMLVEVAVAI. The Extracellular segment spans residues 103–203; sequence AGYVFRDQVK…TIAAWLRKNV (101 aa). 3 N-linked (GlcNAc...) asparagine glycosylation sites follow: Asn-130, Asn-150, and Asn-172. Residues 204-224 traverse the membrane as a helical segment; it reads LLVAGAALGIAFVEVLGIIFS. Residues 225–238 lie on the Cytoplasmic side of the membrane; the sequence is CCLVKSIRSGYEVM. A Lysosomal targeting motif motif is present at residues 234-238; that stretch reads GYEVM.

The protein belongs to the tetraspanin (TM4SF) family. As to quaternary structure, interacts with TIMP1 and ITGB1 and recruits TIMP1 to ITGB1. Interacts with CD9. Identified in a complex with CD9 and ITGB3. Interacts with PMEL. Interacts with KDR/VEGFR2; identified in a complex with ITGB1 and KDR/VEGFR2 and is required to recruit KDR to ITGB1 complexes. Interacts with SYT7. Post-translationally, palmitoylated at a low, basal level in unstimulated platelets. The level of palmitoylation increases when platelets are activated by thrombin (in vitro). As to expression, detected in mast cells and platelets (at protein level).

The protein localises to the cell membrane. The protein resides in the lysosome membrane. It is found in the late endosome membrane. It localises to the endosome. Its subcellular location is the multivesicular body. The protein localises to the melanosome. The protein resides in the secreted. It is found in the extracellular exosome. It localises to the cell surface. Functionally, functions as a cell surface receptor for TIMP1 and plays a role in the activation of cellular signaling cascades. Plays a role in the activation of ITGB1 and integrin signaling, leading to the activation of AKT, FAK/PTK2 and MAP kinases. Promotes cell survival, reorganization of the actin cytoskeleton, cell adhesion, spreading and migration, via its role in the activation of AKT and FAK/PTK2. Plays a role in VEGFA signaling via its role in regulating the internalization of KDR/VEGFR2. Plays a role in intracellular vesicular transport processes, and is required for normal trafficking of the PMEL luminal domain that is essential for the development and maturation of melanocytes. Plays a role in the adhesion of leukocytes onto endothelial cells via its role in the regulation of SELP trafficking. May play a role in mast cell degranulation in response to Ms4a2/FceRI stimulation, but not in mast cell degranulation in response to other stimuli. The sequence is that of CD63 antigen (Cd63) from Rattus norvegicus (Rat).